A 128-amino-acid polypeptide reads, in one-letter code: Large ribosomal subunit protein bL20 (128 aa).

This sequence belongs to the bacterial ribosomal protein bL20 family.

Its function is as follows. Binds directly to 23S ribosomal RNA and is necessary for the in vitro assembly process of the 50S ribosomal subunit. It is not involved in the protein synthesizing functions of that subunit. This is Large ribosomal subunit protein bL20 from Anaplasma marginale (strain Florida).